Reading from the N-terminus, the 165-residue chain is Cyclic pyranopterin monophosphate synthase (165 aa).

Substrate is bound by residues 76–78 (LCH) and 114–115 (ME). Asp-129 is an active-site residue.

It belongs to the MoaC family. Homohexamer; trimer of dimers.

The catalysed reaction is (8S)-3',8-cyclo-7,8-dihydroguanosine 5'-triphosphate = cyclic pyranopterin phosphate + diphosphate. The protein operates within cofactor biosynthesis; molybdopterin biosynthesis. In terms of biological role, catalyzes the conversion of (8S)-3',8-cyclo-7,8-dihydroguanosine 5'-triphosphate to cyclic pyranopterin monophosphate (cPMP). The polypeptide is Cyclic pyranopterin monophosphate synthase (Brucella abortus (strain 2308)).